A 174-amino-acid polypeptide reads, in one-letter code: Small ribosomal subunit protein uS5c (174 aa).

Residues 17–80 enclose the S5 DRBM domain; sequence WEERVVQVKR…TDAKKHLVTV (64 aa).

The protein belongs to the universal ribosomal protein uS5 family. In terms of assembly, part of the 30S ribosomal subunit. Contacts protein S4.

The protein resides in the plastid. Its subcellular location is the chloroplast. In terms of biological role, with S4 and S12 plays an important role in translational accuracy. The protein is Small ribosomal subunit protein uS5c (rps5) of Porphyra purpurea (Red seaweed).